The chain runs to 121 residues: Ribonuclease P protein component (121 aa).

It belongs to the RnpA family. Consists of a catalytic RNA component (M1 or rnpB) and a protein subunit.

It carries out the reaction Endonucleolytic cleavage of RNA, removing 5'-extranucleotides from tRNA precursor.. Its function is as follows. RNaseP catalyzes the removal of the 5'-leader sequence from pre-tRNA to produce the mature 5'-terminus. It can also cleave other RNA substrates such as 4.5S RNA. The protein component plays an auxiliary but essential role in vivo by binding to the 5'-leader sequence and broadening the substrate specificity of the ribozyme. In Oceanobacillus iheyensis (strain DSM 14371 / CIP 107618 / JCM 11309 / KCTC 3954 / HTE831), this protein is Ribonuclease P protein component.